The primary structure comprises 63 residues: Large ribosomal subunit protein uL29 (63 aa).

This sequence belongs to the universal ribosomal protein uL29 family.

The protein is Large ribosomal subunit protein uL29 of Mannheimia succiniciproducens (strain KCTC 0769BP / MBEL55E).